The primary structure comprises 794 residues: Ent-kaurene synthase 1, chloroplastic (794 aa).

A chloroplast-targeting transit peptide spans 1 to 28 (MSLLLSNSVLVGPKFRSSRISHASASLD). Residues D543, D547, N687, and E695 each contribute to the Mg(2+) site. Residues 543 to 547 (DDFFD) carry the DDXXD motif motif.

This sequence belongs to the terpene synthase family. Mg(2+) is required as a cofactor. Accumulates in leaves, and, at low levels, in germinating seeds.

It is found in the plastid. Its subcellular location is the chloroplast. The catalysed reaction is ent-copalyl diphosphate = ent-kaur-16-ene + diphosphate. Its pathway is secondary metabolite biosynthesis; terpenoid biosynthesis. It participates in plant hormone biosynthesis; gibberellin biosynthesis. Functionally, involved in the biosynthesis of ent-kaurene diterpenoids natural products such as oridonin, miltiradiene, eriocalyxin B and nezukol, known to exhibit antitumor, anti-inflammatory and antibacterial activities, and in the production of gibberellins phytohormones. Catalyzes the conversion of ent-copalyl diphosphate (ent-CPP) to ent-kaurene. The polypeptide is Ent-kaurene synthase 1, chloroplastic (Isodon eriocalyx (Plectranthus eriocalyx)).